Here is a 38-residue protein sequence, read N- to C-terminus: U9-ctenitoxin-Pk1a (38 aa).

Disulfide bonds link C2/C17, C9/C22, C16/C36, and C24/C34.

As to expression, expressed by the venom gland.

It is found in the secreted. The chain is U9-ctenitoxin-Pk1a from Phoneutria keyserlingi (Brazilian wandering spider).